The following is a 327-amino-acid chain: ATP-dependent 6-phosphofructokinase (327 aa).

An ATP-binding site is contributed by glycine 12. ADP contacts are provided by residues 22-26 and 55-60; these read RGVVR and RYSVSD. ATP-binding positions include 73–74 and 103–106; these read RF and GDGS. Aspartate 104 serves as a coordination point for Mg(2+). 127–129 contributes to the substrate binding site; sequence TID. The active-site Proton acceptor is the aspartate 129. Arginine 156 lines the ADP pocket. Substrate contacts are provided by residues arginine 164 and 171–173; that span reads MGR. Residues 187–189, lysine 213, and 215–217 each bind ADP; these read GCE and KKH. Residues glutamate 224, arginine 245, and 251 to 254 each bind substrate; that span reads HIQR.

It belongs to the phosphofructokinase type A (PFKA) family. ATP-dependent PFK group I subfamily. Prokaryotic clade 'B1' sub-subfamily. As to quaternary structure, homotetramer. Mg(2+) serves as cofactor.

The protein localises to the cytoplasm. The catalysed reaction is beta-D-fructose 6-phosphate + ATP = beta-D-fructose 1,6-bisphosphate + ADP + H(+). It functions in the pathway carbohydrate degradation; glycolysis; D-glyceraldehyde 3-phosphate and glycerone phosphate from D-glucose: step 3/4. Its activity is regulated as follows. Allosterically activated by ADP and other diphosphonucleosides, and allosterically inhibited by phosphoenolpyruvate. Catalyzes the phosphorylation of D-fructose 6-phosphate to fructose 1,6-bisphosphate by ATP, the first committing step of glycolysis. The polypeptide is ATP-dependent 6-phosphofructokinase (Yersinia pseudotuberculosis serotype IB (strain PB1/+)).